The sequence spans 754 residues: Phosphatase and actin regulator 4B (754 aa).

Residues 1-12 (MENRDDEVEHQH) are compositionally biased toward basic and acidic residues. Disordered regions lie at residues 1-38 (MENR…FSTL), 83-105 (KELP…KNGH), 120-625 (VHSP…SKEQ), and 637-666 (LTRR…DRQA). An RPEL 1 repeat occupies 61 to 86 (EVLERKMSMRRPRQELIEQGVLKELP). Basic and acidic residues-rich tracts occupy residues 138–153 (PEDR…DHRG), 184–221 (HGED…EPDW), and 229–241 (SSVE…RESD). Composition is skewed to low complexity over residues 296 to 307 (SFCSSNSSSSSS) and 316 to 333 (SSAG…LTTS). Composition is skewed to pro residues over residues 348-357 (KQPPMPPPKP), 381-390 (KPSPPMPPKR), 427-445 (LPPP…PSPP), and 460-478 (YPLP…PPED). Composition is skewed to acidic residues over residues 483 to 503 (DEDD…DEEP), 541 to 557 (SEEE…ESDS), and 566 to 576 (DESDEDEEDDS). Residues 605–615 (QAPERQAKSEH) show a composition bias toward basic and acidic residues. RPEL repeat units follow at residues 635-660 (TALT…QPKN) and 673-698 (RRLT…RFHE). Ser642 bears the Phosphoserine mark.

The protein belongs to the phosphatase and actin regulator family. As to quaternary structure, binds ppp1ca and actin.

The protein localises to the cytoplasm. It is found in the cell projection. The protein resides in the lamellipodium. Regulator of protein phosphatase 1 (PP1) required for neural tube and optic fissure closure, and enteric neural crest cell (ENCCs) migration during development. Acts as an activator of PP1. During neural tube closure, localizes to the ventral neural tube and activates PP1, leading to down-regulate cell proliferation within cranial neural tissue and the neural retina. Also acts as a regulator of migration of enteric neural crest cells (ENCCs) by activating PP1, leading to repression of the integrin signaling through the rho/rock pathway. In Danio rerio (Zebrafish), this protein is Phosphatase and actin regulator 4B (phactr4b).